Reading from the N-terminus, the 128-residue chain is U24-ctenitoxin-Pn1a (128 aa).

Thyroglobulin type-1 domains follow at residues Lys-4–Cys-67 and Lys-72–Cys-127. 4 disulfide bridges follow: Cys-7-Cys-27, Cys-38-Cys-45, Cys-47-Cys-67, and Cys-107-Cys-127.

In terms of tissue distribution, expressed by the venom gland.

The protein resides in the secreted. In terms of biological role, cysteine proteinase inhibitor. The chain is U24-ctenitoxin-Pn1a from Phoneutria nigriventer (Brazilian armed spider).